Consider the following 424-residue polypeptide: Glutamate-1-semialdehyde 2,1-aminomutase (424 aa).

At lysine 263 the chain carries N6-(pyridoxal phosphate)lysine.

This sequence belongs to the class-III pyridoxal-phosphate-dependent aminotransferase family. HemL subfamily. As to quaternary structure, homodimer. Requires pyridoxal 5'-phosphate as cofactor.

It is found in the cytoplasm. The enzyme catalyses (S)-4-amino-5-oxopentanoate = 5-aminolevulinate. The protein operates within porphyrin-containing compound metabolism; protoporphyrin-IX biosynthesis; 5-aminolevulinate from L-glutamyl-tRNA(Glu): step 2/2. The protein is Glutamate-1-semialdehyde 2,1-aminomutase of Campylobacter jejuni subsp. jejuni serotype O:23/36 (strain 81-176).